A 345-amino-acid chain; its full sequence is Myb/SANT-like DNA-binding domain-containing protein 4 (345 aa).

The Myb-like domain maps to 4 to 77 (LKRKRKSNFS…EVKRRYLDWR (74 aa)). Lys9 is covalently cross-linked (Glycyl lysine isopeptide (Lys-Gly) (interchain with G-Cter in SUMO2)). Residue Ser106 is modified to Phosphoserine. Glycyl lysine isopeptide (Lys-Gly) (interchain with G-Cter in SUMO2) cross-links involve residues Lys114 and Lys142. The segment at 143-175 (VEEEERDPQSPEFEIEEEEEMLSSVIPDSRREN) is disordered. Thr188 is modified (phosphothreonine). Residues 203-345 (LLVNIEKQKL…LRIQKEGHLQ (143 aa)) adopt a coiled-coil conformation. Residues Lys237, Lys254, and Lys273 each participate in a glycyl lysine isopeptide (Lys-Gly) (interchain with G-Cter in SUMO2) cross-link.

This is Myb/SANT-like DNA-binding domain-containing protein 4 (MSANTD4) from Homo sapiens (Human).